A 100-amino-acid polypeptide reads, in one-letter code: NADH-quinone oxidoreductase subunit K (100 aa).

Transmembrane regions (helical) follow at residues Met-1–Gly-21, Ile-28–Ala-48, and Phe-64–Phe-84.

It belongs to the complex I subunit 4L family. In terms of assembly, NDH-1 is composed of 14 different subunits. Subunits NuoA, H, J, K, L, M, N constitute the membrane sector of the complex.

It localises to the cell inner membrane. It catalyses the reaction a quinone + NADH + 5 H(+)(in) = a quinol + NAD(+) + 4 H(+)(out). NDH-1 shuttles electrons from NADH, via FMN and iron-sulfur (Fe-S) centers, to quinones in the respiratory chain. The immediate electron acceptor for the enzyme in this species is believed to be ubiquinone. Couples the redox reaction to proton translocation (for every two electrons transferred, four hydrogen ions are translocated across the cytoplasmic membrane), and thus conserves the redox energy in a proton gradient. The protein is NADH-quinone oxidoreductase subunit K of Helicobacter pylori (strain B38).